The sequence spans 389 residues: Succinate--CoA ligase [ADP-forming] subunit beta (389 aa).

One can recognise an ATP-grasp domain in the interval 9–244 (KEILRKFGVA…LDEEDPAEVE (236 aa)). Residues Lys-46, 53 to 55 (GRG), Glu-99, Ala-102, and Glu-107 contribute to the ATP site. Mg(2+)-binding residues include Asn-199 and Asp-213. Substrate contacts are provided by residues Asn-264 and 321 to 323 (GIM).

Belongs to the succinate/malate CoA ligase beta subunit family. Heterotetramer of two alpha and two beta subunits. It depends on Mg(2+) as a cofactor.

The enzyme catalyses succinate + ATP + CoA = succinyl-CoA + ADP + phosphate. It catalyses the reaction GTP + succinate + CoA = succinyl-CoA + GDP + phosphate. It functions in the pathway carbohydrate metabolism; tricarboxylic acid cycle; succinate from succinyl-CoA (ligase route): step 1/1. Its function is as follows. Succinyl-CoA synthetase functions in the citric acid cycle (TCA), coupling the hydrolysis of succinyl-CoA to the synthesis of either ATP or GTP and thus represents the only step of substrate-level phosphorylation in the TCA. The beta subunit provides nucleotide specificity of the enzyme and binds the substrate succinate, while the binding sites for coenzyme A and phosphate are found in the alpha subunit. The sequence is that of Succinate--CoA ligase [ADP-forming] subunit beta from Paraburkholderia phytofirmans (strain DSM 17436 / LMG 22146 / PsJN) (Burkholderia phytofirmans).